Reading from the N-terminus, the 231-residue chain is MRIAVIGAMEEEVRILRDKLEQAEIESVAGCEFTKGMLVGHEVILLKSGIGKVNAAMSTTILLERYQPEKVINTGSAGGFHHALNVGDVVISTEVRHHDVDVTAFNYEYGQVPGMPPGFKADKELVALAEQCMKEEENIQVVKGMIATGDSFMSDPNRVAAIRGKFENLYAVEMEAAAVAQVCHQYNVPFVIIRALSDIAGKESNVSFDQFLDQAALHSTNFIVKVLKELK.

Residue Glu12 is the Proton acceptor of the active site. Substrate contacts are provided by residues Gly78, Met153, and 174-175 (ME). Residue Asp198 is the Proton donor of the active site.

This sequence belongs to the PNP/UDP phosphorylase family. MtnN subfamily.

It carries out the reaction S-adenosyl-L-homocysteine + H2O = S-(5-deoxy-D-ribos-5-yl)-L-homocysteine + adenine. The enzyme catalyses S-methyl-5'-thioadenosine + H2O = 5-(methylsulfanyl)-D-ribose + adenine. The catalysed reaction is 5'-deoxyadenosine + H2O = 5-deoxy-D-ribose + adenine. It participates in amino-acid biosynthesis; L-methionine biosynthesis via salvage pathway; S-methyl-5-thio-alpha-D-ribose 1-phosphate from S-methyl-5'-thioadenosine (hydrolase route): step 1/2. In terms of biological role, catalyzes the irreversible cleavage of the glycosidic bond in both 5'-methylthioadenosine (MTA) and S-adenosylhomocysteine (SAH/AdoHcy) to adenine and the corresponding thioribose, 5'-methylthioribose and S-ribosylhomocysteine, respectively. Also cleaves 5'-deoxyadenosine, a toxic by-product of radical S-adenosylmethionine (SAM) enzymes, into 5-deoxyribose and adenine. The protein is 5'-methylthioadenosine/S-adenosylhomocysteine nucleosidase of Bacillus cytotoxicus (strain DSM 22905 / CIP 110041 / 391-98 / NVH 391-98).